The chain runs to 430 residues: Inactive metallocarboxypeptidase ECM14 (430 aa).

Residues M1–G24 form the signal peptide. Residues L25–R105 constitute a propeptide that is removed on maturation. N41 is a glycosylation site (N-linked (GlcNAc...) asparagine). Positions E120–L425 constitute a Peptidase M14 domain. Residues H182 and E185 each contribute to the Zn(2+) site. Substrate is bound by residues H182–E185, R240, and D257–H258. Cysteines 251 and 272 form a disulfide. An N-linked (GlcNAc...) asparagine glycan is attached at N295. H310 lines the Zn(2+) pocket. A substrate-binding site is contributed by S311–Y312.

It belongs to the peptidase M14 family. The cofactor is Zn(2+). In terms of processing, N-glycosylated.

It localises to the vacuole. Its subcellular location is the secreted. Functionally, inactive carboxypeptidase that may play a role in cell wall organization and biogenesis. This chain is Inactive metallocarboxypeptidase ECM14, found in Saccharomyces cerevisiae (strain ATCC 204508 / S288c) (Baker's yeast).